Consider the following 144-residue polypeptide: 3-hydroxyacyl-[acyl-carrier-protein] dehydratase FabZ (144 aa).

The active site involves histidine 51.

This sequence belongs to the thioester dehydratase family. FabZ subfamily.

It localises to the cytoplasm. It carries out the reaction a (3R)-hydroxyacyl-[ACP] = a (2E)-enoyl-[ACP] + H2O. Its function is as follows. Involved in unsaturated fatty acids biosynthesis. Catalyzes the dehydration of short chain beta-hydroxyacyl-ACPs and long chain saturated and unsaturated beta-hydroxyacyl-ACPs. The polypeptide is 3-hydroxyacyl-[acyl-carrier-protein] dehydratase FabZ (Lactococcus lactis subsp. cremoris (strain SK11)).